Here is a 491-residue protein sequence, read N- to C-terminus: V-type proton ATPase subunit B 1 (491 aa).

Arginine 380 provides a ligand contact to ATP.

The protein belongs to the ATPase alpha/beta chains family. As to quaternary structure, V-ATPase is a heteromultimeric enzyme made up of two complexes: the ATP-hydrolytic V1 complex and the proton translocation V0 complex. The V1 complex consists of three catalytic AB heterodimers that form a heterohexamer, three peripheral stalks each consisting of EG heterodimers, one central rotor including subunits D and F, and the regulatory subunits C and H. The proton translocation complex V0 consists of the proton transport subunit a, a ring of proteolipid subunits c9c'', rotary subunit d, subunits e and f, and the accessory subunits vah-19/Ac45 and vah-20/PRR. As to expression, expressed ubiquitously. Highly expressed in the H-shaped excretory cell, the excretory pore, the intestine, and hypodermal cells. Expressed in the nervous system. Expressed at low levels in muscles.

Its function is as follows. Non-catalytic subunit of the V1 complex of vacuolar(H+)-ATPase (V-ATPase), a multisubunit enzyme composed of a peripheral complex (V1) that hydrolyzes ATP and a membrane integral complex (V0) that translocates protons. V-ATPase is responsible for acidifying and maintaining the pH of intracellular compartments and in some cell types, is targeted to the plasma membrane, where it is responsible for acidifying the extracellular environment. Essential for the proper assembly and activity of V-ATPase. Required maternally for early embryogenesis and zygotically during morphogenesis. Specifically, involved in the clearance of apoptotic cell corpses in embryos. Also, during embryonic development, the V-ATPase is required to repress fusion of epidermal cells probably by negatively regulating eff-1-mediated cell fusion. In neurons, required for necrotic cell death by promoting intracellular acidification. Required for cell death induced by hypoxia. Required for acidification of synaptic vesicles and the release of neurotransmitters from adult neurons. The protein is V-type proton ATPase subunit B 1 of Caenorhabditis elegans.